The chain runs to 1021 residues: Sodium/potassium-transporting ATPase subunit alpha-1 (1021 aa).

A propeptide spanning residues 1-5 (MGKGA) is cleaved from the precursor. The segment covering 1–11 (MGKGAGRDKYE) has biased composition (basic and acidic residues). A disordered region spans residues 1-31 (MGKGAGRDKYEPTATSEHGTKKKKAKERDMD). The Cytoplasmic portion of the chain corresponds to 6 to 85 (GRDKYEPTAT…NTLTPPPTTP (80 aa)). Tyr-10 carries the phosphotyrosine modification. The residue at position 16 (Ser-16) is a Phosphoserine; by PKC. Residues 80–82 (PPP) are phosphoinositide-3 kinase binding. A helical membrane pass occupies residues 86–106 (EWVKFCRQLFGGFSLLLWIGS). At 107-129 (LLCFLAYGITSVMEGEPNSDNLY) the chain is on the extracellular side. The chain crosses the membrane as a helical span at residues 130-150 (LGVVLAAVVIITGCFSYYQEA). Residues 151–286 (KSSKIMESFK…GGKTPIAMEI (136 aa)) lie on the Cytoplasmic side of the membrane. The tract at residues 214–233 (SSLTGESEPQTRSPDFSNEN) is disordered. Residues 287-306 (EHFIHLITGVAVFLGVSFFI) traverse the membrane as a helical segment. Topologically, residues 307 to 318 (LSLILEYTWLEA) are extracellular. Residues 319–336 (VIFLIGIIVANVPEGLLA) form a helical membrane-spanning segment. Residues 337–770 (TVTVCLTLTA…EEGRLIFDNL (434 aa)) lie on the Cytoplasmic side of the membrane. Asp-374 serves as the catalytic 4-aspartylphosphate intermediate. Lys-485 serves as a coordination point for ATP. Residues Asp-715 and Asp-719 each contribute to the Mg(2+) site. The helical transmembrane segment at 771–790 (KKSIAYTLTSNIPEITPFLI) threads the bilayer. The Extracellular portion of the chain corresponds to 791–800 (FIIANIPLPL). Residues 801 to 821 (GTCTILCIDLGTDMVPAISLA) traverse the membrane as a helical segment. Residues 822–841 (YEQAESDIMKRQPRNPKTDK) are Cytoplasmic-facing. The chain crosses the membrane as a helical span at residues 842–864 (LVNERLISMAYGQIGMIQALGGF). Topologically, residues 865 to 916 (FTYFVIMAENGFLPSGLVGIRLQWDDRWINDVEDSYGQQWTFEQRKIVEFTC) are extracellular. Residues 917–936 (HTAFFVSIVVVQWADLIICK) traverse the membrane as a helical segment. At 937 to 949 (TRRNSVFQQGMKN) the chain is on the cytoplasmic side. Phosphoserine; by PKA is present on Ser-941. A helical transmembrane segment spans residues 950 to 968 (KILIFGLFEETALAAFLSY). The Extracellular portion of the chain corresponds to 969–983 (CPGMDVALRMYPLKP). The chain crosses the membrane as a helical span at residues 984–1004 (TWWFCAFPYSLLIFLYDEIRK). Residues 1005–1021 (LIIRRNPGGWVERETYY) lie on the Cytoplasmic side of the membrane.

This sequence belongs to the cation transport ATPase (P-type) (TC 3.A.3) family. Type IIC subfamily. In terms of assembly, the sodium/potassium-transporting ATPase is composed of a catalytic alpha subunit, an auxiliary non-catalytic beta subunit and an additional regulatory subunit. In terms of processing, phosphorylation on Tyr-10 modulates pumping activity.

The protein resides in the cell membrane. It localises to the sarcolemma. The enzyme catalyses K(+)(out) + Na(+)(in) + ATP + H2O = K(+)(in) + Na(+)(out) + ADP + phosphate + H(+). Functionally, this is the catalytic component of the active enzyme, which catalyzes the hydrolysis of ATP coupled with the exchange of sodium and potassium ions across the plasma membrane. This action creates the electrochemical gradient of sodium and potassium ions, providing the energy for active transport of various nutrients. In Gallus gallus (Chicken), this protein is Sodium/potassium-transporting ATPase subunit alpha-1 (ATP1A1).